A 112-amino-acid polypeptide reads, in one-letter code: DNA-directed RNA polymerase subunit Rpo11 (112 aa).

Belongs to the archaeal Rpo11/eukaryotic RPB11/RPC19 RNA polymerase subunit family. Part of the RNA polymerase complex.

The protein resides in the cytoplasm. The enzyme catalyses RNA(n) + a ribonucleoside 5'-triphosphate = RNA(n+1) + diphosphate. In terms of biological role, DNA-dependent RNA polymerase (RNAP) catalyzes the transcription of DNA into RNA using the four ribonucleoside triphosphates as substrates. This chain is DNA-directed RNA polymerase subunit Rpo11, found in Methanopyrus kandleri (strain AV19 / DSM 6324 / JCM 9639 / NBRC 100938).